Here is a 130-residue protein sequence, read N- to C-terminus: MDMRAPAQIFGFLLLLFQGTRCDIQMTQSPSSLSASLGERVSLTCRASQDIGSSLNWLQQEPDGTIKRLIYATSSLDSGVPKRFSGSRSGSDYSLTISSLESEDFVDYYCLQYASSPWTFGGGTKLEIKR.

The first 22 residues, 1–22 (MDMRAPAQIFGFLLLLFQGTRC), serve as a signal peptide directing secretion. The tract at residues 23-45 (DIQMTQSPSSLSASLGERVSLTC) is framework-1. A disulfide bond links Cys-45 and Cys-110. A complementarity-determining-1 region spans residues 46–56 (RASQDIGSSLN). Residues 57–71 (WLQQEPDGTIKRLIY) are framework-2. The tract at residues 72-78 (ATSSLDS) is complementarity-determining-2. Residues 79-110 (GVPKRFSGSRSGSDYSLTISSLESEDFVDYYC) are framework-3. The tract at residues 111–119 (LQYASSPWT) is complementarity-determining-3. Residues 120–129 (FGGGTKLEIK) form a framework-4 region.

In Mus musculus (Mouse), this protein is Immunoglobulin kappa chain variable 9-120.